Reading from the N-terminus, the 214-residue chain is Ubiquitin-conjugating enzyme E2 21 (214 aa).

One can recognise a UBC core domain in the interval 21 to 168 (ARVTRKCKEV…AVYWTSYFAN (148 aa)). Cys-106 (glycyl thioester intermediate) is an active-site residue. The region spanning 172–214 (DVEPDFNRKVGRLIEMGIRETEAIVYLSCNNWKLEQALQFIFD) is the UBA domain.

Belongs to the ubiquitin-conjugating enzyme family.

The catalysed reaction is S-ubiquitinyl-[E1 ubiquitin-activating enzyme]-L-cysteine + [E2 ubiquitin-conjugating enzyme]-L-cysteine = [E1 ubiquitin-activating enzyme]-L-cysteine + S-ubiquitinyl-[E2 ubiquitin-conjugating enzyme]-L-cysteine.. It participates in protein modification; protein ubiquitination. Acts with E3 ubiquitin-protein ligase trim-21 to catalyze the 'Lys-48'-linked polyubiquitination of ced-1, promoting its proteasomal degradation to maintain appropriate ced-1 levels for apoptotic cell clearance. This chain is Ubiquitin-conjugating enzyme E2 21 (ubc-21), found in Caenorhabditis elegans.